The primary structure comprises 675 residues: Methionine--tRNA ligase (675 aa).

A 'HIGH' region motif is present at residues 15 to 25 (PYANGSIHLGH). Zn(2+)-binding residues include C146, C149, C159, and C162. Residues 331–335 (KMSKS) carry the 'KMSKS' region motif. ATP is bound at residue K334. In terms of domain architecture, tRNA-binding spans 574-675 (DFAKIDLRIA…EGAQPGMKVK (102 aa)).

Belongs to the class-I aminoacyl-tRNA synthetase family. MetG type 1 subfamily. Homodimer. The cofactor is Zn(2+).

It localises to the cytoplasm. The catalysed reaction is tRNA(Met) + L-methionine + ATP = L-methionyl-tRNA(Met) + AMP + diphosphate. Its function is as follows. Is required not only for elongation of protein synthesis but also for the initiation of all mRNA translation through initiator tRNA(fMet) aminoacylation. This Pseudoalteromonas atlantica (strain T6c / ATCC BAA-1087) protein is Methionine--tRNA ligase.